We begin with the raw amino-acid sequence, 327 residues long: Phenylalanine--tRNA ligase alpha subunit (327 aa).

Glu-252 provides a ligand contact to Mg(2+).

This sequence belongs to the class-II aminoacyl-tRNA synthetase family. Phe-tRNA synthetase alpha subunit type 1 subfamily. In terms of assembly, tetramer of two alpha and two beta subunits. The cofactor is Mg(2+).

The protein resides in the cytoplasm. It carries out the reaction tRNA(Phe) + L-phenylalanine + ATP = L-phenylalanyl-tRNA(Phe) + AMP + diphosphate + H(+). This Klebsiella pneumoniae subsp. pneumoniae (strain ATCC 700721 / MGH 78578) protein is Phenylalanine--tRNA ligase alpha subunit.